A 492-amino-acid chain; its full sequence is ATP synthase subunit beta, chloroplastic (492 aa).

170-177 contributes to the ATP binding site; that stretch reads GGAGVGKT.

It belongs to the ATPase alpha/beta chains family. As to quaternary structure, F-type ATPases have 2 components, CF(1) - the catalytic core - and CF(0) - the membrane proton channel. CF(1) has five subunits: alpha(3), beta(3), gamma(1), delta(1), epsilon(1). CF(0) has four main subunits: a(1), b(1), b'(1) and c(9-12).

The protein resides in the plastid. The protein localises to the chloroplast thylakoid membrane. It carries out the reaction ATP + H2O + 4 H(+)(in) = ADP + phosphate + 5 H(+)(out). Its function is as follows. Produces ATP from ADP in the presence of a proton gradient across the membrane. The catalytic sites are hosted primarily by the beta subunits. The polypeptide is ATP synthase subunit beta, chloroplastic (Psilotum nudum (Whisk fern)).